The primary structure comprises 262 residues: GTP cyclohydrolase FolE2 (262 aa).

It belongs to the GTP cyclohydrolase IV family.

It catalyses the reaction GTP + H2O = 7,8-dihydroneopterin 3'-triphosphate + formate + H(+). It functions in the pathway cofactor biosynthesis; 7,8-dihydroneopterin triphosphate biosynthesis; 7,8-dihydroneopterin triphosphate from GTP: step 1/1. Functionally, converts GTP to 7,8-dihydroneopterin triphosphate. This is GTP cyclohydrolase FolE2 from Dichelobacter nodosus (strain VCS1703A).